A 204-amino-acid chain; its full sequence is MAKVQVNNVVVLDNPSPFYNPFQFEITFECIEDLSEDLEWKIIYVGSAESEEYDQVLDSVLVGPVPAGRHMFVFQADAPNPGLIPDADAVGVTVVLITCTYRGQEFIRVGYYVNNEYTETELRENPPVKPDFSKLQRNILASNPRVTRFHINWEDNTEKLEDAESSNPNLPSLLSTDALPSASKGWSTSENSLNVMLESHMDCM.

The interval 1–156 (MAKVQVNNVV…TRFHINWEDN (156 aa)) is interaction with histone H3, CHAF1B, and HIRA. A Required for interaction with HIRA motif is present at residues 31–37 (IEDLSED). A required for interaction with HIRA region spans residues 155–204 (DNTEKLEDAESSNPNLPSLLSTDALPSASKGWSTSENSLNVMLESHMDCM). Phosphoserine; by TLK2 is present on Ser-192.

This sequence belongs to the ASF1 family. In terms of assembly, interacts with histone H3 (via C-terminus), including histone H3.1, H3.2 and H3.3, and histone H4; the interaction with H3 is direct. Probably interacts with the heterodimeric form of H3-H4 taking the place of the second dimer. Interacts with the CHAF1A, CHAF1B and RBBP4 subunits of the CAF-1 complex. Interacts with CABIN1, HAT1, HIRA, NASP, TAF1 and UBN1. Found in a soluble complex with NASP and histones H3 and H4; the interaction with NASP is probably indirect and mediated by H3-H4. Interacts with CDAN1. Found in a cytosolic complex with IPO4 and histones H3 and H4. Interacts with CREBBP. Post-translationally, phosphorylated by TLK1 and TLK2. Highly phosphorylated in S-phase and at lower levels in M-phase. TLK2-mediated phosphorylation at Ser-192 prevents proteasome-dependent degradation.

The protein localises to the nucleus. Its function is as follows. Histone chaperone that facilitates histone deposition and histone exchange and removal during nucleosome assembly and disassembly. Cooperates with chromatin assembly factor 1 (CAF-1) to promote replication-dependent chromatin assembly and with HIRA to promote replication-independent chromatin assembly. Promotes homologous recombination-mediated repair of double-strand breaks (DSBs) at stalled or collapsed replication forks: acts by mediating histone replacement at DSBs, leading to recruitment of the MMS22L-TONSL complex and subsequent loading of RAD51. Also involved in the nuclear import of the histone H3-H4 dimer together with importin-4 (IPO4): specifically recognizes and binds newly synthesized histones with the monomethylation of H3 'Lys-9' and acetylation at 'Lys-14' (H3K9me1K14ac) marks, and diacetylation at 'Lys-5' and 'Lys-12' of H4 (H4K5K12ac) marks in the cytosol. Required for the formation of senescence-associated heterochromatin foci (SAHF) and efficient senescence-associated cell cycle exit. The chain is Histone chaperone ASF1A (ASF1A) from Bos taurus (Bovine).